The following is a 354-amino-acid chain: UDP-N-acetylglucosamine--N-acetylmuramyl-(pentapeptide) pyrophosphoryl-undecaprenol N-acetylglucosamine transferase (354 aa).

UDP-N-acetyl-alpha-D-glucosamine-binding positions include 14 to 16 (TGG), N126, R162, S190, I243, 262 to 267 (ALTVSE), and Q287.

The protein belongs to the glycosyltransferase 28 family. MurG subfamily.

The protein resides in the cell inner membrane. The catalysed reaction is di-trans,octa-cis-undecaprenyl diphospho-N-acetyl-alpha-D-muramoyl-L-alanyl-D-glutamyl-meso-2,6-diaminopimeloyl-D-alanyl-D-alanine + UDP-N-acetyl-alpha-D-glucosamine = di-trans,octa-cis-undecaprenyl diphospho-[N-acetyl-alpha-D-glucosaminyl-(1-&gt;4)]-N-acetyl-alpha-D-muramoyl-L-alanyl-D-glutamyl-meso-2,6-diaminopimeloyl-D-alanyl-D-alanine + UDP + H(+). The protein operates within cell wall biogenesis; peptidoglycan biosynthesis. Its function is as follows. Cell wall formation. Catalyzes the transfer of a GlcNAc subunit on undecaprenyl-pyrophosphoryl-MurNAc-pentapeptide (lipid intermediate I) to form undecaprenyl-pyrophosphoryl-MurNAc-(pentapeptide)GlcNAc (lipid intermediate II). The protein is UDP-N-acetylglucosamine--N-acetylmuramyl-(pentapeptide) pyrophosphoryl-undecaprenol N-acetylglucosamine transferase of Photobacterium profundum (strain SS9).